Here is a 424-residue protein sequence, read N- to C-terminus: MKLIKNGKVLQNGELQQADILIDGKVIKQIAPAIEPSNGVDIIDAKGHFVSPGFVDVHVHLREPGGEYKETIETGTKAAARGGFTTVCPMPNTRPVPDSVEHFEALQKLIDDNAQVRVLPYASITTRQLGKELVDFPALVKEGAFAFTDDGVGVQTASMMYEGMIEAAKVNKAIVAHCEDNSLIYGGAMHEGKRSKELGIPGIPNICESVQIARDVLLAEAAGCHYHVCHVSTKESVRVIRDAKRAGIHVTAEVTPHHLLLTEDDIPGNNAIYKMNPPLRSTEDREALLEGLLDGTIDCIATDHAPHARDEKAQPMEKAPFGIVGSETAFPLLYTHFVKNGDWTLQQLVDYLTIKPCETFNLEYGTLKENGYADLTIIDLDSEQEIKGEDFLSKADNTPFIGYKVYGNPILTMVEGEVKFEGDK.

Residues H58 and H60 each contribute to the Zn(2+) site. Substrate contacts are provided by residues 60-62, N92, and N276; that span reads HLR. D303 contacts Zn(2+). The active site involves D303. Residues H307 and 321–322 contribute to the substrate site; that span reads FG.

The protein belongs to the metallo-dependent hydrolases superfamily. DHOase family. Class I DHOase subfamily. Requires Zn(2+) as cofactor.

It carries out the reaction (S)-dihydroorotate + H2O = N-carbamoyl-L-aspartate + H(+). It functions in the pathway pyrimidine metabolism; UMP biosynthesis via de novo pathway; (S)-dihydroorotate from bicarbonate: step 3/3. Its function is as follows. Catalyzes the reversible cyclization of carbamoyl aspartate to dihydroorotate. The sequence is that of Dihydroorotase from Staphylococcus aureus (strain COL).